The sequence spans 258 residues: Type III pantothenate kinase (258 aa).

Residue 6 to 13 coordinates ATP; sequence DIGNTNTV. Substrate contacts are provided by residues Y100 and 107–110; that span reads GADR. The active-site Proton acceptor is D109. D129 is a K(+) binding site. T132 lines the ATP pocket. Substrate is bound at residue T185.

Belongs to the type III pantothenate kinase family. In terms of assembly, homodimer. Requires NH4(+) as cofactor. K(+) serves as cofactor.

The protein localises to the cytoplasm. It catalyses the reaction (R)-pantothenate + ATP = (R)-4'-phosphopantothenate + ADP + H(+). Its pathway is cofactor biosynthesis; coenzyme A biosynthesis; CoA from (R)-pantothenate: step 1/5. In terms of biological role, catalyzes the phosphorylation of pantothenate (Pan), the first step in CoA biosynthesis. The protein is Type III pantothenate kinase of Syntrophobacter fumaroxidans (strain DSM 10017 / MPOB).